The following is a 453-amino-acid chain: Bifunctional protein GlmU (453 aa).

The segment at 1-226 is pyrophosphorylase; it reads MKFSTVILAA…SIEVEGVNDR (226 aa). UDP-N-acetyl-alpha-D-glucosamine contacts are provided by residues 8–11, Lys22, Gln73, 78–79, 100–102, Gly137, Glu151, Asn166, and Asn224; these read LAAG, GT, and YGD. Residue Asp102 coordinates Mg(2+). Asn224 is a binding site for Mg(2+). The interval 227–247 is linker; that stretch reads IQLARLERAFQARQAKKLLEQ. Residues 248–453 form an N-acetyltransferase region; sequence GVMLRDPARF…AGWQRPAKKK (206 aa). Arg330 and Lys348 together coordinate UDP-N-acetyl-alpha-D-glucosamine. The Proton acceptor role is filled by His360. Tyr363 and Asn374 together coordinate UDP-N-acetyl-alpha-D-glucosamine. Residues Ala377, 383-384, Ser402, Ala420, and Arg437 contribute to the acetyl-CoA site; that span reads NY.

This sequence in the N-terminal section; belongs to the N-acetylglucosamine-1-phosphate uridyltransferase family. In the C-terminal section; belongs to the transferase hexapeptide repeat family. In terms of assembly, homotrimer. It depends on Mg(2+) as a cofactor.

Its subcellular location is the cytoplasm. It carries out the reaction alpha-D-glucosamine 1-phosphate + acetyl-CoA = N-acetyl-alpha-D-glucosamine 1-phosphate + CoA + H(+). The enzyme catalyses N-acetyl-alpha-D-glucosamine 1-phosphate + UTP + H(+) = UDP-N-acetyl-alpha-D-glucosamine + diphosphate. The protein operates within nucleotide-sugar biosynthesis; UDP-N-acetyl-alpha-D-glucosamine biosynthesis; N-acetyl-alpha-D-glucosamine 1-phosphate from alpha-D-glucosamine 6-phosphate (route II): step 2/2. It participates in nucleotide-sugar biosynthesis; UDP-N-acetyl-alpha-D-glucosamine biosynthesis; UDP-N-acetyl-alpha-D-glucosamine from N-acetyl-alpha-D-glucosamine 1-phosphate: step 1/1. Its pathway is bacterial outer membrane biogenesis; LPS lipid A biosynthesis. Functionally, catalyzes the last two sequential reactions in the de novo biosynthetic pathway for UDP-N-acetylglucosamine (UDP-GlcNAc). The C-terminal domain catalyzes the transfer of acetyl group from acetyl coenzyme A to glucosamine-1-phosphate (GlcN-1-P) to produce N-acetylglucosamine-1-phosphate (GlcNAc-1-P), which is converted into UDP-GlcNAc by the transfer of uridine 5-monophosphate (from uridine 5-triphosphate), a reaction catalyzed by the N-terminal domain. In Vibrio cholerae serotype O1 (strain ATCC 39541 / Classical Ogawa 395 / O395), this protein is Bifunctional protein GlmU.